The primary structure comprises 188 residues: Phosphatidylinositol N-acetylglucosaminyltransferase subunit H (188 aa).

This sequence belongs to the PIGH family. Component of the glycosylphosphatidylinositol-N-acetylglucosaminyltransferase (GPI-GnT) complex composed at least by PIGA, PIGC, PIGH, PIGP, PIGQ, PIGY and DPM2. Interacts with PIGQ.

Its subcellular location is the cytoplasm. Its pathway is glycolipid biosynthesis; glycosylphosphatidylinositol-anchor biosynthesis. Functionally, part of the glycosylphosphatidylinositol-N-acetylglucosaminyltransferase (GPI-GnT) complex that catalyzes the transfer of N-acetylglucosamine from UDP-N-acetylglucosamine to phosphatidylinositol and participates in the first step of GPI biosynthesis. The sequence is that of Phosphatidylinositol N-acetylglucosaminyltransferase subunit H from Mus musculus (Mouse).